A 384-amino-acid chain; its full sequence is Inactive lipoate--protein ligase 2 (384 aa).

Positions 79–303 (NESKGNECIF…HIKHIINYKN (225 aa)) constitute a BPL/LPL catalytic domain.

The protein resides in the mitochondrion. It localises to the plastid. It is found in the apicoplast. In the mitochondrion and together with LipL1, involved in the lipoylation of the E2 component of the branched chain alpha-ketoacid dehydrogenase complex BCKDH-E2/BCDH and the E2 component of the alpha -ketoglutarate dehydrogenase complex KDH. LipL1 is responsible for catalysing the activation of lipoate, forming lipoyl-AMP while LipL2 is required but is not capable of catalyzing this reaction. Although its role is unclear, it may catalyze the transfer of lipoyl groups from lipoyl-AMP to BCDH and KDH or act as an effector protein. The chain is Inactive lipoate--protein ligase 2 from Plasmodium falciparum (isolate 3D7).